Here is a 142-residue protein sequence, read N- to C-terminus: Large-conductance mechanosensitive channel (142 aa).

Transmembrane regions (helical) follow at residues 15–35 (AFVM…GAAF), 38–58 (IVTS…IGNI), and 82–102 (GMFI…FVAI).

The protein belongs to the MscL family. As to quaternary structure, homopentamer.

It is found in the cell inner membrane. Its function is as follows. Channel that opens in response to stretch forces in the membrane lipid bilayer. May participate in the regulation of osmotic pressure changes within the cell. In Fusobacterium nucleatum subsp. nucleatum (strain ATCC 25586 / DSM 15643 / BCRC 10681 / CIP 101130 / JCM 8532 / KCTC 2640 / LMG 13131 / VPI 4355), this protein is Large-conductance mechanosensitive channel.